The sequence spans 216 residues: Probable ubiquitin-conjugating enzyme E2 ECU01_1010 (216 aa).

Residues 1–10 (MFKPSAHRRL) are compositionally biased toward basic residues. The segment at 1 to 29 (MFKPSAHRRLPREDDIIQEDDEDGPLWPS) is disordered. A UBC core domain is found at 29-196 (SALRRLSNEE…VIRIAREEDE (168 aa)). Residue cysteine 120 is the Glycyl thioester intermediate of the active site.

This sequence belongs to the ubiquitin-conjugating enzyme family.

It catalyses the reaction S-ubiquitinyl-[E1 ubiquitin-activating enzyme]-L-cysteine + [E2 ubiquitin-conjugating enzyme]-L-cysteine = [E1 ubiquitin-activating enzyme]-L-cysteine + S-ubiquitinyl-[E2 ubiquitin-conjugating enzyme]-L-cysteine.. It participates in protein modification; protein ubiquitination. Catalyzes the covalent attachment of ubiquitin to other proteins so as to signal them for selective protein degradation. Involved in the formation of multiubiquitin chains. This chain is Probable ubiquitin-conjugating enzyme E2 ECU01_1010, found in Encephalitozoon cuniculi (strain GB-M1) (Microsporidian parasite).